Here is a 791-residue protein sequence, read N- to C-terminus: DNA repair and recombination protein RAD54-like (791 aa).

Positions methionine 1–alanine 20 are enriched in polar residues. A disordered region spans residues methionine 1–phenylalanine 53. The interval arginine 2–glutamine 9 is required for chromatin remodeling, strand pairing activities and coupling of ATPase activity. Threonine 22 is subject to Phosphothreonine. The span at cysteine 34–phenylalanine 53 shows a compositional bias: basic and acidic residues. In terms of domain architecture, Helicase ATP-binding spans glutamate 175–glutamate 349. An ATP-binding site is contributed by aspartate 188–threonine 195. A DEGH box motif is present at residues aspartate 300 to histidine 303. Positions leucine 506–threonine 663 constitute a Helicase C-terminal domain. A disordered region spans residues lysine 747–phenylalanine 791. Over residues aspartate 782 to phenylalanine 791 the composition is skewed to acidic residues.

This sequence belongs to the SNF2/RAD54 helicase family. As to quaternary structure, interacts (via N-terminus) with spn-A/Rad51.

The protein resides in the nucleus. Involved in mitotic DNA repair and meiotic recombination. Functions in the recombinational DNA repair pathway. Essential for interhomolog gene conversion (GC), but may have a less important role in intersister GC than spn-A/Rad51. In the presence of DNA, spn-A/Rad51 enhances the ATPase activity of okr/Rad54. This Drosophila ananassae (Fruit fly) protein is DNA repair and recombination protein RAD54-like.